The following is a 442-amino-acid chain: D-aminoacyl-tRNA deacylase (442 aa).

Belongs to the DtdA deacylase family. In terms of assembly, monomer. Requires Zn(2+) as cofactor.

The catalysed reaction is a D-aminoacyl-tRNA + H2O = a tRNA + a D-alpha-amino acid + H(+). The enzyme catalyses glycyl-tRNA(Ala) + H2O = tRNA(Ala) + glycine + H(+). Functionally, D-aminoacyl-tRNA deacylase with broad substrate specificity. By recycling D-aminoacyl-tRNA to D-amino acids and free tRNA molecules, this enzyme counteracts the toxicity associated with the formation of D-aminoacyl-tRNA entities in vivo. This is D-aminoacyl-tRNA deacylase from Methanospirillum hungatei JF-1 (strain ATCC 27890 / DSM 864 / NBRC 100397 / JF-1).